The chain runs to 51 residues: Large ribosomal subunit protein eL39 (51 aa).

Belongs to the eukaryotic ribosomal protein eL39 family.

Its function is as follows. Binds specifically to a region in 26S rRNA near the subunit interface. This Sulfolobus acidocaldarius (strain ATCC 33909 / DSM 639 / JCM 8929 / NBRC 15157 / NCIMB 11770) protein is Large ribosomal subunit protein eL39 (rpl39e).